The sequence spans 188 residues: Peptidyl-tRNA hydrolase (188 aa).

Tyr14 contacts tRNA. His19 serves as the catalytic Proton acceptor. TRNA is bound by residues Tyr64, Asn66, and Asn112.

The protein belongs to the PTH family. As to quaternary structure, monomer.

It localises to the cytoplasm. It catalyses the reaction an N-acyl-L-alpha-aminoacyl-tRNA + H2O = an N-acyl-L-amino acid + a tRNA + H(+). Its function is as follows. Hydrolyzes ribosome-free peptidyl-tRNAs (with 1 or more amino acids incorporated), which drop off the ribosome during protein synthesis, or as a result of ribosome stalling. In terms of biological role, catalyzes the release of premature peptidyl moieties from peptidyl-tRNA molecules trapped in stalled 50S ribosomal subunits, and thus maintains levels of free tRNAs and 50S ribosomes. The sequence is that of Peptidyl-tRNA hydrolase from Clostridium novyi (strain NT).